A 762-amino-acid chain; its full sequence is 5-methyltetrahydropteroyltriglutamate--homocysteine methyltransferase (762 aa).

5-methyltetrahydropteroyltri-L-glutamate-binding positions include 17 to 20 (REWK) and K111. L-homocysteine-binding positions include 435–437 (IGS) and E488. L-methionine contacts are provided by residues 435–437 (IGS) and E488. 5-methyltetrahydropteroyltri-L-glutamate-binding positions include 519-520 (RC) and W565. L-homocysteine is bound at residue D603. D603 is a binding site for L-methionine. E609 serves as a coordination point for 5-methyltetrahydropteroyltri-L-glutamate. H645, C647, and E669 together coordinate Zn(2+). H698 (proton donor) is an active-site residue. C730 contacts Zn(2+).

It belongs to the vitamin-B12 independent methionine synthase family. Zn(2+) serves as cofactor.

The enzyme catalyses 5-methyltetrahydropteroyltri-L-glutamate + L-homocysteine = tetrahydropteroyltri-L-glutamate + L-methionine. It participates in amino-acid biosynthesis; L-methionine biosynthesis via de novo pathway; L-methionine from L-homocysteine (MetE route): step 1/1. Its function is as follows. Catalyzes the transfer of a methyl group from 5-methyltetrahydrofolate to homocysteine resulting in methionine formation. This Bacillus mycoides (strain KBAB4) (Bacillus weihenstephanensis) protein is 5-methyltetrahydropteroyltriglutamate--homocysteine methyltransferase.